The following is a 447-amino-acid chain: Aladin (447 aa).

The segment at 49-69 (STPSSLQENEGQENGDKASGE) is disordered. WD repeat units lie at residues 97–138 (LSEI…EPCI), 142–181 (DSQR…NMAL), 210–250 (QNDE…GTPI), and 252–291 (RGLG…SEPW).

Part of the nuclear pore complex (NPC). The NPC has an eight-fold symmetrical structure comprising a central transport channel and two rings, the cytoplasmic and nuclear rings, to which eight filaments are attached. The cytoplasmic filaments have loose ends, while the nuclear filaments are joined in a distal ring, forming a nuclear basket. NPCs are highly dynamic in configuration and composition, and can be devided in 3 subcomplexes, the NUP62 subcomplex, the NUP107-160 subcomplex and the NUP93 subcomplex, containing approximately 30 different nucleoporin proteins.

It localises to the nucleus envelope. The protein localises to the nucleus. Its subcellular location is the nuclear pore complex. This is Aladin from Arabidopsis thaliana (Mouse-ear cress).